Consider the following 223-residue polypeptide: Coiled-coil domain-containing protein 124 (223 aa).

The tract at residues 1-126 (MPKKFQGENT…AEKAKSHLEV (126 aa)) is disordered. A coiled-coil region spans residues 15–82 (ARARRAEAKA…LLEEEDSKLK (68 aa)). Composition is skewed to basic and acidic residues over residues 18–74 (RRAE…QRLL) and 99–126 (QIED…HLEV). Residues Ser-141 and Ser-194 each carry the phosphoserine modification. The segment at 204-223 (WLRSPDNPMNQRAVPFNAPK) is disordered.

It belongs to the CCDC124 family. Associates with translationally inactive ribosomes in the nonrotated state. Interacts with RASGEF1B. As to expression, ubiquitously expressed.

The protein resides in the cytoplasm. Its subcellular location is the cytoskeleton. It localises to the microtubule organizing center. The protein localises to the centrosome. It is found in the midbody. Ribosome-binding protein involved in ribosome hibernation: associates with translationally inactive ribosomes and stabilizes the nonrotated conformation of the 80S ribosome, thereby promoting ribosome preservation and storage. Also required for proper progression of late cytokinetic stages. In Homo sapiens (Human), this protein is Coiled-coil domain-containing protein 124.